We begin with the raw amino-acid sequence, 158 residues long: Transcription elongation factor GreA (158 aa).

It belongs to the GreA/GreB family.

Functionally, necessary for efficient RNA polymerase transcription elongation past template-encoded arresting sites. The arresting sites in DNA have the property of trapping a certain fraction of elongating RNA polymerases that pass through, resulting in locked ternary complexes. Cleavage of the nascent transcript by cleavage factors such as GreA or GreB allows the resumption of elongation from the new 3'terminus. GreA releases sequences of 2 to 3 nucleotides. In Verminephrobacter eiseniae (strain EF01-2), this protein is Transcription elongation factor GreA.